The chain runs to 505 residues: Serine/threonine-protein kinase D (505 aa).

The region spanning 9–271 is the Protein kinase domain; it reads YEIVKSLGSG…AMYQALHSLI (263 aa). ATP is bound by residues 15–23 and lysine 40; that span reads LGSGGFGDT. Aspartate 136 functions as the Proton acceptor in the catalytic mechanism. The region spanning 436–505 is the SH3b domain; it reads GASATIGGIP…GWIASQLVNF (70 aa).

The protein belongs to the protein kinase superfamily. Ser/Thr protein kinase family.

It carries out the reaction L-seryl-[protein] + ATP = O-phospho-L-seryl-[protein] + ADP + H(+). The catalysed reaction is L-threonyl-[protein] + ATP = O-phospho-L-threonyl-[protein] + ADP + H(+). This chain is Serine/threonine-protein kinase D (spkD), found in Synechocystis sp. (strain ATCC 27184 / PCC 6803 / Kazusa).